The following is a 331-amino-acid chain: DNA-directed RNA polymerase subunit alpha (331 aa).

The tract at residues 1–235 is alpha N-terminal domain (alpha-NTD); it reads MTMHIRWRGM…KHLNPFVQYR (235 aa). The interval 255-331 is alpha C-terminal domain (alpha-CTD); that stretch reads QLEAKLNMTL…GMRVPNQPLF (77 aa).

It belongs to the RNA polymerase alpha chain family. As to quaternary structure, homodimer. The RNAP catalytic core consists of 2 alpha, 1 beta, 1 beta' and 1 omega subunit. When a sigma factor is associated with the core the holoenzyme is formed, which can initiate transcription.

The enzyme catalyses RNA(n) + a ribonucleoside 5'-triphosphate = RNA(n+1) + diphosphate. DNA-dependent RNA polymerase catalyzes the transcription of DNA into RNA using the four ribonucleoside triphosphates as substrates. The polypeptide is DNA-directed RNA polymerase subunit alpha (Rhodopirellula baltica (strain DSM 10527 / NCIMB 13988 / SH1)).